Reading from the N-terminus, the 135-residue chain is Crustacean hyperglycemic hormones A* (135 aa).

Residues 1 to 26 (MVSFRTMWSVVVVVVVASLASSGVQG) form the signal peptide. At Gln-62 the chain carries Pyrrolidone carboxylic acid. 3 cysteine pairs are disulfide-bonded: Cys-68/Cys-104, Cys-84/Cys-100, and Cys-87/Cys-113. Val-133 is subject to Valine amide.

The protein belongs to the arthropod CHH/MIH/GIH/VIH hormone family. As to expression, produced by the medulla terminalis X-organ in the eyestalks and transported to the sinus gland where they are stored and released.

It is found in the secreted. Its function is as follows. Hormone found in the sinus gland of isopods and decapods which controls the blood sugar level. Has a secretagogue action over the amylase released from the midgut gland. May act as a stress hormone and may be involved in the control of molting and reproduction. This Faxonius limosus (Spinycheek crayfish) protein is Crustacean hyperglycemic hormones A* (CHHA*).